The sequence spans 215 residues: Osmoprotectant import permease protein OsmW (215 aa).

In terms of domain architecture, ABC transmembrane type-1 spans 18 to 202 (TFQHLWLVAL…LLAIVLDWLL (185 aa)). The next 6 helical transmembrane spans lie at 24-44 (LVAL…VLIV), 51-73 (TPVL…GLMI), 78-100 (LIGH…LLPI), 132-152 (WVEI…AVVM), 153-173 (NIGV…LLLL), and 183-203 (MLIA…WLLH).

The protein belongs to the binding-protein-dependent transport system permease family. The complex is composed of two ATP-binding proteins (OsmV), two transmembrane proteins (OsmW and OsmY) and a solute-binding protein (OsmX).

Its subcellular location is the cell inner membrane. Part of the OsmU ABC transporter complex, which is involved in the uptake of osmoprotectants such as choline-O-sulfate and glycine betaine. Probably responsible for the translocation of the substrate across the membrane. The chain is Osmoprotectant import permease protein OsmW (osmW) from Salmonella typhimurium (strain LT2 / SGSC1412 / ATCC 700720).